Here is a 298-residue protein sequence, read N- to C-terminus: UDP-N-acetylenolpyruvoylglucosamine reductase (298 aa).

The region spanning 26–191 (KTGGAADVFV…LDATFSLALE (166 aa)) is the FAD-binding PCMH-type domain. Arginine 170 is an active-site residue. Serine 220 acts as the Proton donor in catalysis. Glutamate 290 is an active-site residue.

Belongs to the MurB family. FAD serves as cofactor.

It localises to the cytoplasm. The enzyme catalyses UDP-N-acetyl-alpha-D-muramate + NADP(+) = UDP-N-acetyl-3-O-(1-carboxyvinyl)-alpha-D-glucosamine + NADPH + H(+). Its pathway is cell wall biogenesis; peptidoglycan biosynthesis. Cell wall formation. The sequence is that of UDP-N-acetylenolpyruvoylglucosamine reductase from Listeria monocytogenes serovar 1/2a (strain ATCC BAA-679 / EGD-e).